Reading from the N-terminus, the 784-residue chain is LPS-assembly protein LptD (784 aa).

A signal peptide spans 1–24 (MKKRIPTLLATMIATALYSQQGLA). Cystine bridges form between Cys31–Cys724 and Cys173–Cys725.

This sequence belongs to the LptD family. Component of the lipopolysaccharide transport and assembly complex. Interacts with LptE and LptA. Contains two intramolecular disulfide bonds.

The protein resides in the cell outer membrane. Functionally, together with LptE, is involved in the assembly of lipopolysaccharide (LPS) at the surface of the outer membrane. The polypeptide is LPS-assembly protein LptD (Escherichia coli O6:K15:H31 (strain 536 / UPEC)).